The chain runs to 1432 residues: Probable ATP-dependent RNA helicase spindle-E (1432 aa).

The region spanning Leu-124–Val-291 is the Helicase ATP-binding domain. Gly-137–Thr-144 serves as a coordination point for ATP. The DEAH box signature appears at Asp-237 to His-240. In terms of domain architecture, Helicase C-terminal spans Lys-337–Glu-524. The 64-residue stretch at Ala-936–Gln-999 folds into the Tudor domain.

The protein belongs to the DEAD box helicase family. DEAH subfamily.

The protein localises to the cytoplasm. The catalysed reaction is ATP + H2O = ADP + phosphate + H(+). Probable ATP-binding RNA helicase which plays a central role during spermatogenesis and oogenesis by repressing transposable elements and preventing their mobilization, which is essential for the germline integrity. Acts via the piRNA metabolic process, which mediates the repression of transposable elements during meiosis by forming complexes composed of piRNAs and Piwi and govern the methylation and subsequent repression of transposons. Involved in the repression of LTR retrotransposon copia. Also involved in telomere regulation by repressing specialized telomeric retroelements HeT-A, TAHRE, and TART; Drosophila telomeres being maintained by transposition of specialized telomeric retroelements. Involved in telomeric trans-silencing, a repression mechanism by which a transposon or a transgene inserted in subtelomeric heterochromatin has the capacity to repress in trans in the female germline, a homologous transposon, or transgene located in euchromatin. Involved in the repression of testis-expressed Stellate genes by the homologous Su(Ste) repeats. Required for anteroposterior and dorsoventral axis formation during oogenesis. This Drosophila erecta (Fruit fly) protein is Probable ATP-dependent RNA helicase spindle-E (spn-E).